Reading from the N-terminus, the 851-residue chain is DNA mismatch repair protein MutS (851 aa).

Position 602–609 (602–609) interacts with ATP; sequence GPNMSGKS.

The protein belongs to the DNA mismatch repair MutS family.

In terms of biological role, this protein is involved in the repair of mismatches in DNA. It is possible that it carries out the mismatch recognition step. This protein has a weak ATPase activity. The chain is DNA mismatch repair protein MutS from Streptococcus pyogenes serotype M49 (strain NZ131).